A 339-amino-acid polypeptide reads, in one-letter code: Erlin-2 (339 aa).

Residues 1-3 lie on the Cytoplasmic side of the membrane; the sequence is MAQ. The chain crosses the membrane as a helical span at residues 4–24; sequence LGAVVAVASSFFCASLFSAVH. Residues 25–339 lie on the Lumenal side of the membrane; it reads KIEEGHIGVY…EPLETATKEN (315 aa). N-linked (GlcNAc...) asparagine glycosylation occurs at Asn106. The segment at 177 to 309 is interaction with ERLIN1; that stretch reads EAIRRNYELM…DIPNMFMDSA (133 aa). Lys267 is subject to N6-acetyllysine.

It belongs to the band 7/mec-2 family. In terms of assembly, forms a heteromeric complex with ERLIN1. In complex with ERLIN1, interacts with RNF170. Interacts with activated ITPR1, independently of the degree of ITPR1 polyubiquitination. Interacts with SCAP, INSIG1, SREBF1 and SREBF2 under cholesterol sufficiency conditions; indicative for an association with the SCAP-SREBP-INSIG complex. Probably part of an AMFR/gp78 and INSIG1-containing ubiquitin ligase complex involved in ERAD of HMGCR. Interacts with TMUB1; TMUB1 bridges the association with AMFR. Interacts with SYVN1 and RNF139. Interacts with TMEM259. Interacts with TMEM41B. Deubiquitinated by USP25; leading to stabilization. Ubiquitous.

The protein resides in the endoplasmic reticulum membrane. Its function is as follows. Component of the ERLIN1/ERLIN2 complex which mediates the endoplasmic reticulum-associated degradation (ERAD) of inositol 1,4,5-trisphosphate receptors (IP3Rs) such as ITPR1. Promotes sterol-accelerated ERAD of HMGCR probably implicating an AMFR/gp78-containing ubiquitin ligase complex. Involved in regulation of cellular cholesterol homeostasis by regulation the SREBP signaling pathway. May promote ER retention of the SCAP-SREBF complex. The sequence is that of Erlin-2 (ERLIN2) from Homo sapiens (Human).